A 196-amino-acid chain; its full sequence is MSFIRSALAAAAFVALSIGAVQTASAADPENTVILKLKDGDVALELRPDLAPKHVAQIKKLVREGAYNGVAFHRVIPGFMAQTGDVKFGNMDKGFDAARVGTGGSNYPDLPAEFSKEPFVRGTVGMARSQNPNSANSQFFIMFDDGPFLNGQYTVVGKVVSGMDAVDKIKKGSEAENGAVKNPDKIIKATIEADTK.

Residues 1–26 form the signal peptide; it reads MSFIRSALAAAAFVALSIGAVQTASA. A PPIase cyclophilin-type domain is found at 29–194; it reads PENTVILKLK…KIIKATIEAD (166 aa).

Belongs to the cyclophilin-type PPIase family.

It is found in the periplasm. It catalyses the reaction [protein]-peptidylproline (omega=180) = [protein]-peptidylproline (omega=0). In terms of biological role, PPIases accelerate the folding of proteins. It catalyzes the cis-trans isomerization of proline imidic peptide bonds in oligopeptides. The chain is Probable peptidyl-prolyl cis-trans isomerase (ppi) from Brucella melitensis biotype 1 (strain ATCC 23456 / CCUG 17765 / NCTC 10094 / 16M).